Consider the following 240-residue polypeptide: LexA repressor (240 aa).

The H-T-H motif DNA-binding region spans 26–46 (FDEMKDALDLKSKSGIHRLIT). Residues S161 and K199 each act as for autocatalytic cleavage activity in the active site.

The protein belongs to the peptidase S24 family. As to quaternary structure, homodimer.

The enzyme catalyses Hydrolysis of Ala-|-Gly bond in repressor LexA.. Its function is as follows. Represses a number of genes involved in the response to DNA damage (SOS response), including recA and lexA. In the presence of single-stranded DNA, RecA interacts with LexA causing an autocatalytic cleavage which disrupts the DNA-binding part of LexA, leading to derepression of the SOS regulon and eventually DNA repair. The chain is LexA repressor from Methylobacterium nodulans (strain LMG 21967 / CNCM I-2342 / ORS 2060).